Consider the following 198-residue polypeptide: MYEYFEGIIQAVTPAYIVIDVHGIGFRLLVANPYHFEAGEQKRVYVQLIIRDNDQTLYGFEGAADKRTFNQLLTVTGIGPKSALAILANVSSGGLATAIAQDDVKFLTKFPGIGKKTAAQIILDLKGKITTDGQPAAAAIAPVASDVDSELADALAALVALGYPQRTVDGLTDTLKAFSAKTTDAYLREGLRLLSGKA.

Residues 1–61 are domain I; sequence MYEYFEGIIQ…DNDQTLYGFE (61 aa). The domain II stretch occupies residues 62-140; the sequence is GAADKRTFNQ…TDGQPAAAAI (79 aa). Residues 141–145 are flexible linker; it reads APVAS. Residues 146–198 are domain III; sequence DVDSELADALAALVALGYPQRTVDGLTDTLKAFSAKTTDAYLREGLRLLSGKA.

Belongs to the RuvA family. Homotetramer. Forms an RuvA(8)-RuvB(12)-Holliday junction (HJ) complex. HJ DNA is sandwiched between 2 RuvA tetramers; dsDNA enters through RuvA and exits via RuvB. An RuvB hexamer assembles on each DNA strand where it exits the tetramer. Each RuvB hexamer is contacted by two RuvA subunits (via domain III) on 2 adjacent RuvB subunits; this complex drives branch migration. In the full resolvosome a probable DNA-RuvA(4)-RuvB(12)-RuvC(2) complex forms which resolves the HJ.

It is found in the cytoplasm. Functionally, the RuvA-RuvB-RuvC complex processes Holliday junction (HJ) DNA during genetic recombination and DNA repair, while the RuvA-RuvB complex plays an important role in the rescue of blocked DNA replication forks via replication fork reversal (RFR). RuvA specifically binds to HJ cruciform DNA, conferring on it an open structure. The RuvB hexamer acts as an ATP-dependent pump, pulling dsDNA into and through the RuvAB complex. HJ branch migration allows RuvC to scan DNA until it finds its consensus sequence, where it cleaves and resolves the cruciform DNA. This is Holliday junction branch migration complex subunit RuvA from Lacticaseibacillus casei (strain BL23) (Lactobacillus casei).